Reading from the N-terminus, the 105-residue chain is Phosphoribosyl-AMP cyclohydrolase (105 aa).

Asp72 lines the Mg(2+) pocket. Cys73 is a Zn(2+) binding site. Mg(2+) contacts are provided by Asp74 and Asp76. 2 residues coordinate Zn(2+): Cys89 and Cys96.

Belongs to the PRA-CH family. In terms of assembly, homodimer. Mg(2+) is required as a cofactor. It depends on Zn(2+) as a cofactor.

It localises to the cytoplasm. The catalysed reaction is 1-(5-phospho-beta-D-ribosyl)-5'-AMP + H2O = 1-(5-phospho-beta-D-ribosyl)-5-[(5-phospho-beta-D-ribosylamino)methylideneamino]imidazole-4-carboxamide. It participates in amino-acid biosynthesis; L-histidine biosynthesis; L-histidine from 5-phospho-alpha-D-ribose 1-diphosphate: step 3/9. In terms of biological role, catalyzes the hydrolysis of the adenine ring of phosphoribosyl-AMP. The sequence is that of Phosphoribosyl-AMP cyclohydrolase from Listeria monocytogenes serovar 1/2a (strain ATCC BAA-679 / EGD-e).